Consider the following 163-residue polypeptide: 2-C-methyl-D-erythritol 2,4-cyclodiphosphate synthase (163 aa).

Residues D15 and H17 each contribute to the a divalent metal cation site. 4-CDP-2-C-methyl-D-erythritol 2-phosphate-binding positions include 15 to 17 (DFH) and 41 to 42 (HS). Position 49 (H49) interacts with a divalent metal cation. Residues 63–65 (DIG) and 139–142 (TTNE) each bind 4-CDP-2-C-methyl-D-erythritol 2-phosphate.

This sequence belongs to the IspF family. In terms of assembly, homotrimer. The cofactor is a divalent metal cation.

The catalysed reaction is 4-CDP-2-C-methyl-D-erythritol 2-phosphate = 2-C-methyl-D-erythritol 2,4-cyclic diphosphate + CMP. It participates in isoprenoid biosynthesis; isopentenyl diphosphate biosynthesis via DXP pathway; isopentenyl diphosphate from 1-deoxy-D-xylulose 5-phosphate: step 4/6. Functionally, involved in the biosynthesis of isopentenyl diphosphate (IPP) and dimethylallyl diphosphate (DMAPP), two major building blocks of isoprenoid compounds. Catalyzes the conversion of 4-diphosphocytidyl-2-C-methyl-D-erythritol 2-phosphate (CDP-ME2P) to 2-C-methyl-D-erythritol 2,4-cyclodiphosphate (ME-CPP) with a corresponding release of cytidine 5-monophosphate (CMP). In Gloeobacter violaceus (strain ATCC 29082 / PCC 7421), this protein is 2-C-methyl-D-erythritol 2,4-cyclodiphosphate synthase.